The sequence spans 116 residues: Protein Wnt-5a (116 aa).

Ser-1 carries O-palmitoleoyl serine; by PORCN lipidation. N-linked (GlcNAc...) asparagine glycans are attached at residues Asn-69 and Asn-83. Cys-82 and Cys-97 are joined by a disulfide.

This sequence belongs to the Wnt family. Post-translationally, palmitoleoylation is required for efficient binding to frizzled receptors. Depalmitoleoylation leads to Wnt signaling pathway inhibition.

The protein resides in the secreted. The protein localises to the extracellular space. Its subcellular location is the extracellular matrix. In terms of biological role, ligand for members of the frizzled family of seven transmembrane receptors. Can activate or inhibit canonical Wnt signaling, depending on receptor context. Required during embryogenesis for extension of the primary anterior-posterior axis. The protein is Protein Wnt-5a (WNT-5A) of Plestiodon skiltonianus (Western skink).